The following is a 335-amino-acid chain: Pyridoxal 5'-phosphate synthase subunit PdxS (335 aa).

D30 contributes to the D-ribose 5-phosphate binding site. The Schiff-base intermediate with D-ribose 5-phosphate role is filled by K87. G159 contributes to the D-ribose 5-phosphate binding site. R171 lines the D-glyceraldehyde 3-phosphate pocket. D-ribose 5-phosphate-binding positions include G257 and 278–279; that span reads GS.

Belongs to the PdxS/SNZ family. In the presence of PdxT, forms a dodecamer of heterodimers.

It carries out the reaction aldehydo-D-ribose 5-phosphate + D-glyceraldehyde 3-phosphate + L-glutamine = pyridoxal 5'-phosphate + L-glutamate + phosphate + 3 H2O + H(+). Its pathway is cofactor biosynthesis; pyridoxal 5'-phosphate biosynthesis. Functionally, catalyzes the formation of pyridoxal 5'-phosphate from ribose 5-phosphate (RBP), glyceraldehyde 3-phosphate (G3P) and ammonia. The ammonia is provided by the PdxT subunit. Can also use ribulose 5-phosphate and dihydroxyacetone phosphate as substrates, resulting from enzyme-catalyzed isomerization of RBP and G3P, respectively. The protein is Pyridoxal 5'-phosphate synthase subunit PdxS of Pyrococcus furiosus (strain ATCC 43587 / DSM 3638 / JCM 8422 / Vc1).